The following is a 567-amino-acid chain: Dihydroxy-acid dehydratase (567 aa).

Cys57 is a binding site for [2Fe-2S] cluster. Residue Asp89 coordinates Mg(2+). Residue Cys130 coordinates [2Fe-2S] cluster. Asp131 and Lys132 together coordinate Mg(2+). Residue Lys132 is modified to N6-carboxylysine. Residue Cys202 coordinates [2Fe-2S] cluster. Glu453 is a binding site for Mg(2+). Ser479 functions as the Proton acceptor in the catalytic mechanism.

This sequence belongs to the IlvD/Edd family. Homodimer. [2Fe-2S] cluster serves as cofactor. The cofactor is Mg(2+).

It carries out the reaction (2R)-2,3-dihydroxy-3-methylbutanoate = 3-methyl-2-oxobutanoate + H2O. It catalyses the reaction (2R,3R)-2,3-dihydroxy-3-methylpentanoate = (S)-3-methyl-2-oxopentanoate + H2O. It functions in the pathway amino-acid biosynthesis; L-isoleucine biosynthesis; L-isoleucine from 2-oxobutanoate: step 3/4. Its pathway is amino-acid biosynthesis; L-valine biosynthesis; L-valine from pyruvate: step 3/4. In terms of biological role, functions in the biosynthesis of branched-chain amino acids. Catalyzes the dehydration of (2R,3R)-2,3-dihydroxy-3-methylpentanoate (2,3-dihydroxy-3-methylvalerate) into 2-oxo-3-methylpentanoate (2-oxo-3-methylvalerate) and of (2R)-2,3-dihydroxy-3-methylbutanoate (2,3-dihydroxyisovalerate) into 2-oxo-3-methylbutanoate (2-oxoisovalerate), the penultimate precursor to L-isoleucine and L-valine, respectively. This Nocardioides sp. (strain ATCC BAA-499 / JS614) protein is Dihydroxy-acid dehydratase.